The chain runs to 89 residues: Large ribosomal subunit protein uL24 (89 aa).

This sequence belongs to the universal ribosomal protein uL24 family. In terms of assembly, part of the 50S ribosomal subunit.

One of two assembly initiator proteins, it binds directly to the 5'-end of the 23S rRNA, where it nucleates assembly of the 50S subunit. Functionally, one of the proteins that surrounds the polypeptide exit tunnel on the outside of the subunit. The chain is Large ribosomal subunit protein uL24 from Chlorobium chlorochromatii (strain CaD3).